The chain runs to 268 residues: Zinc transporter ZupT (268 aa).

Transmembrane regions (helical) follow at residues 6 to 26, 37 to 57, 73 to 93, 126 to 146, 153 to 173, 189 to 209, 211 to 231, and 248 to 268; these read IIFAFSLTLFAGLATGVGGVI, FLAGSLGFSVGVMLFVSFVEI, GGNWAATGAFFAGIALIAVID, VLTAIAISIHNFPEGFATFVA, IAIPVAVAIAIHNIPEGIAVA, WATLSGLAEPAGAVVGFILLM, FLGPEAMGLSFAAVAGIMVFI, and TAIYGLVGGMAVMAVSLLLFI. Positions 136 and 139 each coordinate Fe(2+). Zn(2+) contacts are provided by Glu139 and His164. The Fe(2+) site is built by Asn165, Glu168, and Glu197. Residue Glu168 coordinates Zn(2+).

This sequence belongs to the ZIP transporter (TC 2.A.5) family. ZupT subfamily.

It localises to the cell membrane. The catalysed reaction is Zn(2+)(in) = Zn(2+)(out). Mediates zinc uptake. May also transport other divalent cations. In Corynebacterium efficiens (strain DSM 44549 / YS-314 / AJ 12310 / JCM 11189 / NBRC 100395), this protein is Zinc transporter ZupT.